Consider the following 200-residue polypeptide: Cytochrome c biogenesis ATP-binding export protein CcmA (200 aa).

One can recognise an ABC transporter domain in the interval 1–200; it reads MRLSGNGLRC…ARELRIGGAA (200 aa). ATP is bound at residue 35–42; that stretch reads GPNGAGKT.

This sequence belongs to the ABC transporter superfamily. CcmA exporter (TC 3.A.1.107) family. The complex is composed of two ATP-binding proteins (CcmA) and two transmembrane proteins (CcmB).

The protein localises to the cell inner membrane. It carries out the reaction heme b(in) + ATP + H2O = heme b(out) + ADP + phosphate + H(+). Part of the ABC transporter complex CcmAB involved in the biogenesis of c-type cytochromes; once thought to export heme, this seems not to be the case, but its exact role is uncertain. Responsible for energy coupling to the transport system. This is Cytochrome c biogenesis ATP-binding export protein CcmA from Nitrobacter winogradskyi (strain ATCC 25391 / DSM 10237 / CIP 104748 / NCIMB 11846 / Nb-255).